We begin with the raw amino-acid sequence, 360 residues long: Peptide chain release factor 1 (360 aa).

Residue Q235 is modified to N5-methylglutamine. A disordered region spans residues 285–313; the sequence is KRQQAEASTRRNLLGSGDRSDRNRTYNFP.

It belongs to the prokaryotic/mitochondrial release factor family. In terms of processing, methylated by PrmC. Methylation increases the termination efficiency of RF1.

Its subcellular location is the cytoplasm. Its function is as follows. Peptide chain release factor 1 directs the termination of translation in response to the peptide chain termination codons UAG and UAA. This Klebsiella pneumoniae (strain 342) protein is Peptide chain release factor 1.